Here is a 397-residue protein sequence, read N- to C-terminus: Growth-regulating factor 5 (397 aa).

In terms of domain architecture, QLQ spans 16 to 51 (PFTPTQWEELEHQALIYKYMVSGVPVPPELIFSIRR). 2 consecutive short sequence motifs (bipartite nuclear localization signal) follow at residues 78 to 96 (RKPD…KKWR) and 114 to 121 (RGRNRARK). A WRC domain is found at 81–125 (DPEPGRCRRTDGKKWRCSREAYPDSKYCEKHMHRGRNRARKSLDQ). 4 disordered regions span residues 108–172 (CEKH…SMDA), 197–217 (LDYP…HHAS), 288–320 (PYHH…DHDH), and 340–397 (VLAN…DTGS). Basic residues predominate over residues 111-120 (HMHRGRNRAR). A compositionally biased stretch (low complexity) spans 128 to 172 (TTTTPLTSPSLSFTNNNNPSPTLSSSSSSNSSSTTYSASSSSMDA). The span at 288–298 (PYHHCSTDHNK) shows a compositional bias: basic and acidic residues.

The protein belongs to the GRF family. In terms of assembly, interacts with GIF1. Strongly expressed in actively growing and developing tissues, such as roots, upper stems, and shoot tips containing the shoot apical meristem (SAM) and flower buds. Also expressed in mature flowers, but weakly expressed in mature stems and leaves.

It is found in the nucleus. Its function is as follows. Transcription activator that plays a role in the regulation of cell expansion in leaf and cotyledons tissues. Acts together with GIF1 for the development of appropriate leaf size and shape through the promotion and/or maintenance of cell proliferation activity in leaf primordia. The protein is Growth-regulating factor 5 (GRF5) of Arabidopsis thaliana (Mouse-ear cress).